Reading from the N-terminus, the 342-residue chain is N-acetyl-gamma-glutamyl-phosphate reductase (342 aa).

C147 is a catalytic residue.

This sequence belongs to the NAGSA dehydrogenase family. Type 1 subfamily.

The protein resides in the cytoplasm. It carries out the reaction N-acetyl-L-glutamate 5-semialdehyde + phosphate + NADP(+) = N-acetyl-L-glutamyl 5-phosphate + NADPH + H(+). The protein operates within amino-acid biosynthesis; L-arginine biosynthesis; N(2)-acetyl-L-ornithine from L-glutamate: step 3/4. Catalyzes the NADPH-dependent reduction of N-acetyl-5-glutamyl phosphate to yield N-acetyl-L-glutamate 5-semialdehyde. The sequence is that of N-acetyl-gamma-glutamyl-phosphate reductase from Campylobacter jejuni subsp. doylei (strain ATCC BAA-1458 / RM4099 / 269.97).